A 171-amino-acid polypeptide reads, in one-letter code: Envelope protein UL128 (171 aa).

Belongs to the HHV-5 UL128 protein family. In terms of assembly, forms the envelope pentamer complex (PC) composed of gH, gL, UL128, UL130, and UL131A. The pentamer interacts with host NRP2.

The protein resides in the virion membrane. In terms of biological role, plays a role in viral entry into host cells. Forms a pentameric complex at the surface of the viral envelope together with gH, gL, UL130 and UL131. This complex is required for entry in epithelial, endothelial and myeloid host cells. Mechanistically, engages host receptor(s) including neurophilin 2/NRP2 to mediate infection. Additionally, monomeric UL128 may interfere with certain inflammatory cytokines to increase infection and dissemination by blocking monocytes migration. The polypeptide is Envelope protein UL128 (UL128) (Human cytomegalovirus (strain Merlin) (HHV-5)).